The chain runs to 88 residues: Small ribosomal subunit protein bS20 (88 aa).

The interval 1–23 (MANSPQAKKRARQNDKARAHNAS) is disordered.

This sequence belongs to the bacterial ribosomal protein bS20 family.

In terms of biological role, binds directly to 16S ribosomal RNA. The chain is Small ribosomal subunit protein bS20 from Saccharophagus degradans (strain 2-40 / ATCC 43961 / DSM 17024).